The following is a 623-amino-acid chain: Bifunctional dihydrofolate reductase-thymidylate synthase (623 aa).

Positions 9 to 237 (DIYAICACCK…TTLDFLVYSK (229 aa)) constitute a DHFR domain. Residue 13–14 (IC) participates in substrate binding. NADP(+) contacts are provided by residues Ala15 and 38 to 44 (GLGNKGT). A substrate-binding site is contributed by Asp53. A run of 3 repeats spans residues 88 to 91 (GGDN), 94 to 97 (GGDN), and 100 to 103 (GGDN). The interval 88–103 (GGDNTSGGDNTHGGDN) is 3 X 4 AA repeats of G-G-D-N. NADP(+) is bound by residues 115–117 (RSS), 137–139 (SKT), and Asp153. Ile173, Tyr179, and Thr194 together coordinate substrate. Residue 174–181 (GGAQVYRE) participates in NADP(+) binding. Residues 263–309 (TAMRRNVAPRTAAPPMGPHSRANGERAPPRARARRTTPRQRKTTSCT) form a disordered region. Over residues 291-304 (PRARARRTTPRQRK) the composition is skewed to basic residues. Residues 337–623 (QHPEYQYLGI…HDKITMEMAA (287 aa)) are thymidylate synthase. Arg360 contributes to the dUMP binding site. The active site involves Cys505. Residues His506, 524–528 (QRSCD), Asn536, and 566–568 (HVY) contribute to the dUMP site.

The protein in the N-terminal section; belongs to the dihydrofolate reductase family. In the C-terminal section; belongs to the thymidylate synthase family. In terms of assembly, homodimer.

The enzyme catalyses (6S)-5,6,7,8-tetrahydrofolate + NADP(+) = 7,8-dihydrofolate + NADPH + H(+). It carries out the reaction dUMP + (6R)-5,10-methylene-5,6,7,8-tetrahydrofolate = 7,8-dihydrofolate + dTMP. Its pathway is cofactor biosynthesis; tetrahydrofolate biosynthesis; 5,6,7,8-tetrahydrofolate from 7,8-dihydrofolate: step 1/1. Its function is as follows. Bifunctional enzyme. Involved in de novo dTMP biosynthesis. Key enzyme in folate metabolism. Catalyzes an essential reaction for de novo glycine and purine synthesis, DNA precursor synthesis, and for the conversion of dUMP to dTMP. This chain is Bifunctional dihydrofolate reductase-thymidylate synthase, found in Plasmodium vivax.